The primary structure comprises 141 residues: Cystatin-13 (141 aa).

An N-terminal signal peptide occupies residues 1 to 24; that stretch reads MARFLQTLLFLVIMVEFVSRRVEA. Positions 76–80 are secondary area of contact; the sequence is QITDS. Intrachain disulfides connect Cys-94–Cys-104 and Cys-118–Cys-138.

Belongs to the cystatin family. Expressed exclusively in testis. Found in spermatagonia, spermatocytes, round spermatids, elongating spermatids and spermatozoa.

The protein localises to the secreted. It localises to the cytoplasm. In terms of biological role, may perform a specialized role during sperm development and maturation. The chain is Cystatin-13 from Mus musculus (Mouse).